The chain runs to 485 residues: Glutamyl-tRNA(Gln) amidotransferase subunit A (485 aa).

Catalysis depends on charge relay system residues Lys79 and Ser154. Ser178 serves as the catalytic Acyl-ester intermediate.

The protein belongs to the amidase family. GatA subfamily. In terms of assembly, heterotrimer of A, B and C subunits.

The enzyme catalyses L-glutamyl-tRNA(Gln) + L-glutamine + ATP + H2O = L-glutaminyl-tRNA(Gln) + L-glutamate + ADP + phosphate + H(+). Allows the formation of correctly charged Gln-tRNA(Gln) through the transamidation of misacylated Glu-tRNA(Gln) in organisms which lack glutaminyl-tRNA synthetase. The reaction takes place in the presence of glutamine and ATP through an activated gamma-phospho-Glu-tRNA(Gln). The polypeptide is Glutamyl-tRNA(Gln) amidotransferase subunit A (Clostridium botulinum (strain Loch Maree / Type A3)).